The chain runs to 454 residues: tRNA modification GTPase MnmE (454 aa).

Residues R23, E80, and K120 each contribute to the (6S)-5-formyl-5,6,7,8-tetrahydrofolate site. Residues 216-377 (GMKVVIAGRP…LRNHLKQSMG (162 aa)) form the TrmE-type G domain. N226 provides a ligand contact to K(+). GTP is bound by residues 226–231 (NAGKSS), 245–251 (TDIAGTT), 270–273 (DTAG), and 335–338 (NKAD). S230 contributes to the Mg(2+) binding site. Residues T245, I247, and T250 each contribute to the K(+) site. Residue T251 participates in Mg(2+) binding. K454 is a binding site for (6S)-5-formyl-5,6,7,8-tetrahydrofolate.

This sequence belongs to the TRAFAC class TrmE-Era-EngA-EngB-Septin-like GTPase superfamily. TrmE GTPase family. Homodimer. Heterotetramer of two MnmE and two MnmG subunits. K(+) serves as cofactor.

Its subcellular location is the cytoplasm. Exhibits a very high intrinsic GTPase hydrolysis rate. Involved in the addition of a carboxymethylaminomethyl (cmnm) group at the wobble position (U34) of certain tRNAs, forming tRNA-cmnm(5)s(2)U34. The chain is tRNA modification GTPase MnmE from Escherichia coli O157:H7.